Reading from the N-terminus, the 472-residue chain is Glutamate--tRNA ligase 1 (472 aa).

The 'HIGH' region signature appears at 13–23; sequence PSPTGYLHIGG. Zn(2+) contacts are provided by C102, C104, C129, and E131. A 'KMSKS' region motif is present at residues 239–243; it reads RLSKR. K242 contributes to the ATP binding site.

Belongs to the class-I aminoacyl-tRNA synthetase family. Glutamate--tRNA ligase type 1 subfamily. As to quaternary structure, monomer. The cofactor is Zn(2+).

It localises to the cytoplasm. The catalysed reaction is tRNA(Glu) + L-glutamate + ATP = L-glutamyl-tRNA(Glu) + AMP + diphosphate. Catalyzes the attachment of glutamate to tRNA(Glu) in a two-step reaction: glutamate is first activated by ATP to form Glu-AMP and then transferred to the acceptor end of tRNA(Glu). The chain is Glutamate--tRNA ligase 1 from Syntrophus aciditrophicus (strain SB).